The sequence spans 613 residues: Cilia- and flagella-associated protein 100 (613 aa).

The disordered stretch occupies residues 36-55 (KSKESKKNKGNVTISDRSSN). A compositionally biased stretch (polar residues) spans 45-55 (GNVTISDRSSN). Coiled-coil stretches lie at residues 167–198 (ALAM…FLEK), 233–260 (VEIR…KHYK), 396–435 (FTKL…DKEV), and 504–580 (GTVQ…RGRK).

The protein belongs to the CFAP100 family.

It is found in the cytoplasm. The protein resides in the cytoskeleton. Its subcellular location is the cilium axoneme. In terms of biological role, may play a role in ciliary/flagellar motility by regulating the assembly and the activity of axonemal inner dynein arm. The sequence is that of Cilia- and flagella-associated protein 100 from Mus musculus (Mouse).